The sequence spans 1175 residues: DNA-directed RNA polymerase subunit beta (1175 aa).

Positions 1142 to 1175 (PMELSGSDDDEFDQAGASLGINLSRDERSDADIA) are disordered. Basic and acidic residues predominate over residues 1165 to 1175 (SRDERSDADIA).

This sequence belongs to the RNA polymerase beta chain family. As to quaternary structure, the RNAP catalytic core consists of 2 alpha, 1 beta, 1 beta' and 1 omega subunit. When a sigma factor is associated with the core the holoenzyme is formed, which can initiate transcription.

It carries out the reaction RNA(n) + a ribonucleoside 5'-triphosphate = RNA(n+1) + diphosphate. DNA-dependent RNA polymerase catalyzes the transcription of DNA into RNA using the four ribonucleoside triphosphates as substrates. The chain is DNA-directed RNA polymerase subunit beta from Corynebacterium diphtheriae (strain ATCC 700971 / NCTC 13129 / Biotype gravis).